The sequence spans 906 residues: Catenin alpha-1 (906 aa).

Threonine 2 is modified (N-acetylthreonine). Residues 2–228 (TAVHAGNINF…PILYTASQAC (227 aa)) are involved in homodimerization. Lysine 57 is covalently cross-linked (Glycyl lysine isopeptide (Lys-Gly) (interchain with G-Cter in SUMO2)). The tract at residues 97 to 148 (VRKQGDLMKSAAGEFADDPCSSVKRGNMVRAARALLSAVTRLLILADMADVY) is interaction with JUP and CTNNB1. Residues serine 264, serine 295, and serine 297 each carry the phosphoserine modification. Positions 325–394 (TRDDRRERIV…AVMDHVSDSF (70 aa)) are interaction with alpha-actinin. Residue threonine 634 is modified to Phosphothreonine. A Phosphoserine modification is found at serine 641. Threonine 645 carries the post-translational modification Phosphothreonine. 2 positions are modified to phosphoserine: serine 652 and serine 655. Threonine 658 carries the post-translational modification Phosphothreonine. Lysine 797 participates in a covalent cross-link: Glycyl lysine isopeptide (Lys-Gly) (interchain with G-Cter in SUMO2). Phosphoserine is present on serine 851. A compositionally biased stretch (basic and acidic residues) spans 864–880 (PEKKPLVKREKQDETQT). The segment at 864–894 (PEKKPLVKREKQDETQTKIKRASQKKHVNPV) is disordered. A compositionally biased stretch (basic residues) spans 881–891 (KIKRASQKKHV).

It belongs to the vinculin/alpha-catenin family. In terms of assembly, monomer and homodimer; the monomer preferentially binds to CTNNB1 and the homodimer to actin. Component of an cadherin:catenin adhesion complex composed of at least of CDH26, beta-catenin/CTNNB1, alpha-catenin/CTNNA1 and p120 catenin/CTNND1. Possible component of an E-cadherin/ catenin adhesion complex together with E-cadherin/CDH1 and beta-catenin/CTNNB1 or gamma-catenin/JUP; the complex is located to adherens junctions. The stable association of CTNNA1 is controversial as CTNNA1 was shown not to bind to F-actin when assembled in the complex. Alternatively, the CTNNA1-containing complex may be linked to F-actin by other proteins such as LIMA1. Binds AFDN and F-actin. Interacts with LIMA1. Interacts with ARHGAP21. Interacts with AJUBA. Interacts with vinculin/VCL. Interacts with TJP2/ZO2 (via N-terminus). Interacts with TJP1/ZO1 (via N-terminus). In terms of processing, sumoylated. Post-translationally, phosphorylation seems to contribute to the strength of cell-cell adhesion rather than to the basic capacity for cell-cell adhesion. Expressed in cerebellum, heart, liver, small intestine, kidney and placenta (at protein level).

Its subcellular location is the cytoplasm. The protein resides in the cytoskeleton. It localises to the cell junction. It is found in the adherens junction. The protein localises to the cell membrane. Its subcellular location is the nucleus. Functionally, associates with the cytoplasmic domain of a variety of cadherins. The association of catenins to cadherins produces a complex which is linked to the actin filament network, and which seems to be of primary importance for cadherins cell-adhesion properties. Can associate with both E- and N-cadherins. Originally believed to be a stable component of E-cadherin/catenin adhesion complexes and to mediate the linkage of cadherins to the actin cytoskeleton at adherens junctions. In contrast, cortical actin was found to be much more dynamic than E-cadherin/catenin complexes and CTNNA1 was shown not to bind to F-actin when assembled in the complex suggesting a different linkage between actin and adherens junctions components. The homodimeric form may regulate actin filament assembly and inhibit actin branching by competing with the Arp2/3 complex for binding to actin filaments. Involved in the regulation of WWTR1/TAZ, YAP1 and TGFB1-dependent SMAD2 and SMAD3 nuclear accumulation. May play a crucial role in cell differentiation. The chain is Catenin alpha-1 from Mus musculus (Mouse).